Here is a 263-residue protein sequence, read N- to C-terminus: 3-deoxy-manno-octulosonate cytidylyltransferase (263 aa).

It belongs to the KdsB family.

The protein resides in the cytoplasm. It catalyses the reaction 3-deoxy-alpha-D-manno-oct-2-ulosonate + CTP = CMP-3-deoxy-beta-D-manno-octulosonate + diphosphate. Its pathway is nucleotide-sugar biosynthesis; CMP-3-deoxy-D-manno-octulosonate biosynthesis; CMP-3-deoxy-D-manno-octulosonate from 3-deoxy-D-manno-octulosonate and CTP: step 1/1. The protein operates within bacterial outer membrane biogenesis; lipopolysaccharide biosynthesis. Activates KDO (a required 8-carbon sugar) for incorporation into bacterial lipopolysaccharide in Gram-negative bacteria. This chain is 3-deoxy-manno-octulosonate cytidylyltransferase, found in Burkholderia vietnamiensis (strain G4 / LMG 22486) (Burkholderia cepacia (strain R1808)).